Here is a 121-residue protein sequence, read N- to C-terminus: Ragulator complex protein LAMTOR4 homolog (121 aa).

The disordered stretch occupies residues 91 to 121 (TQNGATTSSSSSTSYNDAAEGNNISSSTVLA). The span at 112-121 (NNISSSTVLA) shows a compositional bias: polar residues.

It belongs to the LAMTOR4 family. As to quaternary structure, part of the Ragulator complex.

It is found in the lysosome. Functionally, regulator of the TOR pathway, a signaling cascade that promotes cell growth in response to growth factors, energy levels, and amino acids. As part of the Ragulator complex, may activate the TOR signaling cascade in response to amino acids. This chain is Ragulator complex protein LAMTOR4 homolog, found in Drosophila pseudoobscura pseudoobscura (Fruit fly).